The chain runs to 533 residues: MWLGRRALCALVLLLACASLGLLYASTRDAPGLRLPLAPWAPPQSPRRPELPDLAPEPRYAHIPVRIKEQVVGLLAWNNCSCESSGGGLPLPFQKQVRAIDLTKAFDPAELRAASATREQEFQAFLSRSQSPADQLLIAPANSPLQYPLQGVEVQPLRSILVPGLSLQAASGQEVYQVNLTASLGTWDVAGEVTGVTLTGEGQADLTLVSPGLDQLNRQLQLVTYSSRSYQTNTADTVRFSTEGHEAAFTIRIRHPPNPRLYPPGSLPQGAQYNISALVTIATKTFLRYDRLRALITSIRRFYPTVTVVIADDSDKPERVSGPYVEHYLMPFGKGWFAGRNLAVSQVTTKYVLWVDDDFVFTARTRLERLVDVLERTPLDLVGGAVREISGFATTYRQLLSVEPGAPGLGNCLRQRRGFHHELVGFPGCVVTDGVVNFFLARTDKVREVGFDPRLSRVAHLEFFLDGLGSLRVGSCSDVVVDHASKLKLPWTSRDAGAETYARYRYPGSLDESQMAKHRLLFFKHRLQCMTSQ.

Residues 1–7 (MWLGRRA) lie on the Cytoplasmic side of the membrane. The chain crosses the membrane as a helical; Signal-anchor for type II membrane protein span at residues 8–25 (LCALVLLLACASLGLLYA). The Lumenal segment spans residues 26 to 533 (STRDAPGLRL…KHRLQCMTSQ (508 aa)). 3 N-linked (GlcNAc...) asparagine glycosylation sites follow: asparagine 79, asparagine 179, and asparagine 274. Cysteine 429 and cysteine 476 are joined by a disulfide.

The protein belongs to the glycosyltransferase 2 family. Homodimer; disulfide-linked.

It localises to the golgi apparatus membrane. It catalyses the reaction a ganglioside GM3 (d18:1(4E)) + UDP-N-acetyl-alpha-D-galactosamine = a ganglioside GM2 (d18:1(4E)) + UDP + H(+). The enzyme catalyses a ganglioside GM3 + UDP-N-acetyl-alpha-D-galactosamine = a ganglioside GM2 + UDP + H(+). It carries out the reaction a ganglioside GD3 + UDP-N-acetyl-alpha-D-galactosamine = a ganglioside GD2 + UDP + H(+). The catalysed reaction is a ganglioside GD3 (d18:1(4E)) + UDP-N-acetyl-alpha-D-galactosamine = a ganglioside GD2 (d18:1(4E)) + UDP + H(+). It catalyses the reaction a beta-D-Gal-(1-&gt;4)-beta-D-Glc-(1&lt;-&gt;1)-Cer(d18:1(4E)) + UDP-N-acetyl-alpha-D-galactosamine = a ganglioside GA2 (d18:1(4E)) + UDP + H(+). The enzyme catalyses a ganglioside GD1a + UDP-N-acetyl-alpha-D-galactosamine = a ganglioside GalNAc-GD1a + UDP + H(+). It carries out the reaction a ganglioside GT3 (d18:1(4E)) + UDP-N-acetyl-alpha-D-galactosamine = a ganglioside GT2 (d18:1(4E)) + UDP + H(+). The catalysed reaction is a beta-D-galactosyl-(1-&gt;4)-beta-D-glucosyl-(1&lt;-&gt;1)-ceramide + UDP-N-acetyl-alpha-D-galactosamine = a ganglioside GA2 + UDP + H(+). It catalyses the reaction a neolactoside IV(3)-alpha-NeuGc-nLc4Cer + UDP-N-acetyl-alpha-D-galactosamine = a neolactoside IV(4)-beta-GalNAc-IV(3)-alpha-NeuGc-nLc4Cer + UDP + H(+). Its pathway is sphingolipid metabolism. Functionally, involved in the biosynthesis of gangliosides GM2, GD2, GT2 and GA2 from GM3, GD3, GT3 and GA3, respectively. This Homo sapiens (Human) protein is Beta-1,4 N-acetylgalactosaminyltransferase 1.